We begin with the raw amino-acid sequence, 293 residues long: Diaminopimelate epimerase (293 aa).

Substrate is bound by residues asparagine 17, glutamine 47, and asparagine 67. Cysteine 76 (proton donor) is an active-site residue. Residues 77–78 (GN), asparagine 164, asparagine 197, and 215–216 (ER) contribute to the substrate site. The Proton acceptor role is filled by cysteine 224. 225–226 (GS) lines the substrate pocket.

The protein belongs to the diaminopimelate epimerase family. Homodimer.

It localises to the cytoplasm. The catalysed reaction is (2S,6S)-2,6-diaminopimelate = meso-2,6-diaminopimelate. It participates in amino-acid biosynthesis; L-lysine biosynthesis via DAP pathway; DL-2,6-diaminopimelate from LL-2,6-diaminopimelate: step 1/1. In terms of biological role, catalyzes the stereoinversion of LL-2,6-diaminopimelate (L,L-DAP) to meso-diaminopimelate (meso-DAP), a precursor of L-lysine and an essential component of the bacterial peptidoglycan. In Rhodopseudomonas palustris (strain TIE-1), this protein is Diaminopimelate epimerase.